A 428-amino-acid polypeptide reads, in one-letter code: ATP-dependent RNA helicase RhlB (428 aa).

The Q motif motif lies at 9-37 (QKFSDFALHPLVVEALENKGFQYCTPIQA). One can recognise a Helicase ATP-binding domain in the interval 40–219 (LPLTLSGRDV…FEQMNNAEYV (180 aa)). Residue 53–60 (AQTGTGKT) coordinates ATP. The DEAD box motif lies at 165-168 (DEAD). In terms of domain architecture, Helicase C-terminal spans 245 to 390 (RLLQTLIEEE…VSKYNSDALL (146 aa)). A disordered region spans residues 394 to 428 (PAPKRLARTRTGNGPRRNSAPRRSGAPRNNRKRPG).

The protein belongs to the DEAD box helicase family. RhlB subfamily. As to quaternary structure, component of the RNA degradosome, which is a multiprotein complex involved in RNA processing and mRNA degradation.

Its subcellular location is the cytoplasm. It carries out the reaction ATP + H2O = ADP + phosphate + H(+). Functionally, DEAD-box RNA helicase involved in RNA degradation. Has RNA-dependent ATPase activity and unwinds double-stranded RNA. This chain is ATP-dependent RNA helicase RhlB, found in Yersinia pseudotuberculosis serotype O:1b (strain IP 31758).